A 203-amino-acid polypeptide reads, in one-letter code: Large ribosomal subunit protein bL25 (203 aa).

It belongs to the bacterial ribosomal protein bL25 family. CTC subfamily. In terms of assembly, part of the 50S ribosomal subunit; part of the 5S rRNA/L5/L18/L25 subcomplex. Contacts the 5S rRNA. Binds to the 5S rRNA independently of L5 and L18.

Its function is as follows. This is one of the proteins that binds to the 5S RNA in the ribosome where it forms part of the central protuberance. The sequence is that of Large ribosomal subunit protein bL25 from Cupriavidus pinatubonensis (strain JMP 134 / LMG 1197) (Cupriavidus necator (strain JMP 134)).